The sequence spans 744 residues: MLRSTLSRSAWRTGRHQAARNASRAFSATAQRPAEVELTIDGKKVSIEAGSALIQACEKAGVTIPRYCYHEKLMIAGNCRMCLVEVEKVPKPVASCAWPVQPGMVVKTNSPLTHKAREGVMEFLLANHPLDCPICDQGGECDLQDQSMRYGGDRGRFHEVGGKRAVEDKNMGPLIKTSMNRCIQCTRCVRFANDIAGAPELGSTGRGNDLQIGTYLEKNLDSELSGNVIDLCPVGALTSKPYAFRARPWELKKTESIDVLDGLGSNIRVDTRGLEVMRILPRLNDEVNEEWINDKTRFACDGLKTQRLTIPLVRREGKFEPASWDQALTEIAHAYQTLNPQGNEFKAIAGQLTEVESLVAMKDLANRLGSENLALDMPSGHKPLAHGVDVRSNYIFNSSIVGIESADVILLVGTNPRHEAAVLNARIRKQWLRSDLEIGVVGQTWDSTFEFEHLGTDHAALQKALEGDFGKKLQSAKNPMIIVGSGVTDHGDANAFYETVGKFVDSNASNFLTEEWNGYNVLQRAASRVGAFEVGFTVPSAEIAQTKPKFVWLLGADEFNEADIPKDAFIVYQGHHGDRGAQIADIVLPGAAYTEKAGTYVNTEGRVQMTRAATGLPGAARTDWKILRAVSEYLGVRLPYDDVAQLRDRMVEISPALSSYDIIEPPSLQQLSKVQLVEQNQGATATNEPLKKVIENFYFTDAISRSSPTMARCSAAKKTGDPRTNFMAPGMEEDRPMGQIAYGA.

The segment covering Met-1–Ala-10 has biased composition (polar residues). The disordered stretch occupies residues Met-1 to Phe-26. Residues Met-1 to Pro-33 constitute a mitochondrion transit peptide. In terms of domain architecture, 2Fe-2S ferredoxin-type spans Ala-34–Leu-112. Cys-68, Cys-79, Cys-82, and Cys-96 together coordinate [2Fe-2S] cluster. A 4Fe-4S His(Cys)3-ligated-type domain is found at Leu-112 to Gly-151. [4Fe-4S] cluster is bound by residues His-128, Cys-132, Cys-135, Cys-141, Cys-182, Cys-185, Cys-188, and Cys-232. Positions Leu-251 to Arg-307 constitute a 4Fe-4S Mo/W bis-MGD-type domain.

Belongs to the complex I 75 kDa subunit family. As to quaternary structure, complex I is composed of about 40 different subunits. It depends on [2Fe-2S] cluster as a cofactor. Requires [4Fe-4S] cluster as cofactor.

The protein resides in the mitochondrion inner membrane. It carries out the reaction a ubiquinone + NADH + 5 H(+)(in) = a ubiquinol + NAD(+) + 4 H(+)(out). Core subunit of the mitochondrial membrane respiratory chain NADH dehydrogenase (Complex I) that is believed to belong to the minimal assembly required for catalysis. Complex I functions in the transfer of electrons from NADH to the respiratory chain. The immediate electron acceptor for the enzyme is believed to be ubiquinone. This is the largest subunit of complex I and it is a component of the iron-sulfur (IP) fragment of the enzyme. It may form part of the active site crevice where NADH is oxidized. This chain is NADH-ubiquinone oxidoreductase 78 kDa subunit, mitochondrial (nuo78), found in Neurospora crassa (strain ATCC 24698 / 74-OR23-1A / CBS 708.71 / DSM 1257 / FGSC 987).